The chain runs to 366 residues: MNKVVLLCRPGFEKECAAEITDKAGQREIFGFARVKENAGYVIYECYQPDDGDKLIRELPFSSLIFARQWFVVGELLQHLPPEDRITPIVGMLQGVVEKGGELRVEVADTNESKELLKFCRKFTVPLRAVLRDAGGLANYETPKRPVVHVFFIAPGCCYTGYSYSNNNSPFYMGIPRLKFPADAPSRSTLKLEEAFHVFIPADEWDERLANGMWAVDLGACPGGWTYQLVKRNMWVYSVDNGPMAQSLMDTGQVTWLREDGFKFRPTRSNISWMVCDMVEKPAKVAALMAQWLVNGWCRETIFNLKLPMKKRYEEVSHNLAYIQAQLDEHGINAQIQARQLYHDREEVTVHVRRIWAAVGGRRDER.

S-adenosyl-L-methionine contacts are provided by residues Ser-188, Cys-221 to Gly-224, Asp-240, Asp-260, and Asp-277. The active-site Proton acceptor is the Lys-306.

Belongs to the class I-like SAM-binding methyltransferase superfamily. RNA methyltransferase RlmE family. RlmM subfamily. As to quaternary structure, monomer.

The protein localises to the cytoplasm. The catalysed reaction is cytidine(2498) in 23S rRNA + S-adenosyl-L-methionine = 2'-O-methylcytidine(2498) in 23S rRNA + S-adenosyl-L-homocysteine + H(+). Functionally, catalyzes the 2'-O-methylation at nucleotide C2498 in 23S rRNA. This is Ribosomal RNA large subunit methyltransferase M from Shigella dysenteriae serotype 1 (strain Sd197).